We begin with the raw amino-acid sequence, 73 residues long: Crustacean hyperglycemic hormone (73 aa).

3 disulfide bridges follow: Cys7–Cys43, Cys23–Cys39, and Cys26–Cys52. Val73 carries the post-translational modification Valine amide.

The protein belongs to the arthropod CHH/MIH/GIH/VIH hormone family. In terms of tissue distribution, produced by the medulla terminalis X-organ in the eyestalks and transported to the sinus gland where they are stored and released.

The protein localises to the secreted. In terms of biological role, hormone found in the sinus gland of isopods and decapods which controls the blood sugar level. Has a secretagogue action over the amylase released from the midgut gland. May act as a stress hormone and may be involved in the control of molting and reproduction. In Jasus lalandii (Cape rock lobster), this protein is Crustacean hyperglycemic hormone.